Here is a 689-residue protein sequence, read N- to C-terminus: Methionine--tRNA ligase (689 aa).

Residues 19–29 carry the 'HIGH' region motif; the sequence is PYPTGDLHIGH. The Zn(2+) site is built by C150, C153, C162, and C166. The 'KMSKS' region motif lies at 338-342; sequence GLSTS. T341 is a binding site for ATP. A tRNA-binding domain is found at 591–689; sequence EFQALDLRVG…EDSEPGTKVM (99 aa).

This sequence belongs to the class-I aminoacyl-tRNA synthetase family. MetG type 1 subfamily. In terms of assembly, homodimer. Zn(2+) is required as a cofactor.

Its subcellular location is the cytoplasm. It catalyses the reaction tRNA(Met) + L-methionine + ATP = L-methionyl-tRNA(Met) + AMP + diphosphate. In terms of biological role, is required not only for elongation of protein synthesis but also for the initiation of all mRNA translation through initiator tRNA(fMet) aminoacylation. The polypeptide is Methionine--tRNA ligase (Halobacterium salinarum (strain ATCC 700922 / JCM 11081 / NRC-1) (Halobacterium halobium)).